A 250-amino-acid chain; its full sequence is Ubiquinone/menaquinone biosynthesis C-methyltransferase UbiE (250 aa).

Residues T74, D94, 122–123 (DA), and S139 each bind S-adenosyl-L-methionine.

It belongs to the class I-like SAM-binding methyltransferase superfamily. MenG/UbiE family.

It carries out the reaction a 2-demethylmenaquinol + S-adenosyl-L-methionine = a menaquinol + S-adenosyl-L-homocysteine + H(+). The catalysed reaction is a 2-methoxy-6-(all-trans-polyprenyl)benzene-1,4-diol + S-adenosyl-L-methionine = a 5-methoxy-2-methyl-3-(all-trans-polyprenyl)benzene-1,4-diol + S-adenosyl-L-homocysteine + H(+). Its pathway is quinol/quinone metabolism; menaquinone biosynthesis; menaquinol from 1,4-dihydroxy-2-naphthoate: step 2/2. The protein operates within cofactor biosynthesis; ubiquinone biosynthesis. Its function is as follows. Methyltransferase required for the conversion of demethylmenaquinol (DMKH2) to menaquinol (MKH2) and the conversion of 2-polyprenyl-6-methoxy-1,4-benzoquinol (DDMQH2) to 2-polyprenyl-3-methyl-6-methoxy-1,4-benzoquinol (DMQH2). The protein is Ubiquinone/menaquinone biosynthesis C-methyltransferase UbiE of Ruegeria sp. (strain TM1040) (Silicibacter sp.).